Reading from the N-terminus, the 205-residue chain is Proteasome subunit beta type-3 (205 aa).

N-acetylserine is present on Ser2. Position 77 is an N6-acetyllysine (Lys77).

This sequence belongs to the peptidase T1B family. As to quaternary structure, the 26S proteasome consists of a 20S proteasome core and two 19S regulatory subunits. The 20S proteasome core is a barrel-shaped complex made of 28 subunits that are arranged in four stacked rings. The two outer rings are each formed by seven alpha subunits, and the two inner rings are formed by seven beta subunits. The proteolytic activity is exerted by three beta-subunits PSMB5, PSMB6 and PSMB7.

Its subcellular location is the cytoplasm. The protein resides in the nucleus. Functionally, non-catalytic component of the 20S core proteasome complex involved in the proteolytic degradation of most intracellular proteins. This complex plays numerous essential roles within the cell by associating with different regulatory particles. Associated with two 19S regulatory particles, forms the 26S proteasome and thus participates in the ATP-dependent degradation of ubiquitinated proteins. The 26S proteasome plays a key role in the maintenance of protein homeostasis by removing misfolded or damaged proteins that could impair cellular functions, and by removing proteins whose functions are no longer required. Associated with the PA200 or PA28, the 20S proteasome mediates ubiquitin-independent protein degradation. This type of proteolysis is required in several pathways including spermatogenesis (20S-PA200 complex) or generation of a subset of MHC class I-presented antigenic peptides (20S-PA28 complex). This is Proteasome subunit beta type-3 (Psmb3) from Rattus norvegicus (Rat).